The primary structure comprises 775 residues: Kinesin-like protein KIF3B (775 aa).

The Kinesin motor domain maps to 9 to 341 (SVKVVVRCRP…LRYANRAKNI (333 aa)). Residue 97–104 (GQTGTGKT) participates in ATP binding. The segment at 372-419 (KRSGRKRRRRRRRRVGEGGEEFEDGEDEEDDDDDDEDEEEGVDADKNI) is disordered. A compositionally biased stretch (basic residues) spans 374–385 (SGRKRRRRRRRR). Acidic residues predominate over residues 389–413 (GGEEFEDGEDEEDDDDDDEDEEEGV). Residues 501 to 591 (LELKRQEIAE…QNELTRELKL (91 aa)) are a coiled coil. Positions 716–775 (FHASLGSSPGLSASAAGFSKKPKSGRPKTGKKVSTPTSAHSPLSGSGSPLYPQSRGLVPK) are disordered. The segment covering 718 to 734 (ASLGSSPGLSASAAGFS) has biased composition (low complexity). A compositionally biased stretch (basic residues) spans 735–746 (KKPKSGRPKTGK). The span at 756–765 (SPLSGSGSPL) shows a compositional bias: low complexity.

Belongs to the TRAFAC class myosin-kinesin ATPase superfamily. Kinesin family. In terms of assembly, heterodimer of KIF3A and KIF3B. KIF3A/KIF3B heterodimer interacts with KIFAP3 forming a heterotrimeric (KIF3A/KIF3B/KIFAP3) complex.

Its subcellular location is the cytoplasm. It is found in the cytoskeleton. The protein resides in the cell projection. It localises to the cilium. The protein localises to the dendritic spine. Microtubule-based molecular motor that transport intracellular cargos, such as vesicles, organelles and protein complexes. Uses ATP hydrolysis to generate force to bind and move along the microtubule. Plays a role in cilia formation. Required for photoreceptor development. In Danio rerio (Zebrafish), this protein is Kinesin-like protein KIF3B.